The sequence spans 169 residues: uncharacterized protein (169 aa).

The region spanning 32–162 (CNFRVVNSFV…EPAKSDLIKL (131 aa)) is the Nudix hydrolase domain. Positions 69–91 (GGHVESGETYEDALQRELEEELN) match the Nudix box motif. Mg(2+) is bound by residues glutamate 85 and glutamate 89.

This sequence belongs to the Nudix hydrolase family. Requires Mg(2+) as cofactor.

This is an uncharacterized protein from Nostoc sp. (strain PCC 7120 / SAG 25.82 / UTEX 2576).